Consider the following 231-residue polypeptide: Enolase-phosphatase E1 (231 aa).

2 residues coordinate Mg(2+): aspartate 11 and glutamate 13. Residues 125–126 and lysine 162 contribute to the substrate site; that span reads SS. Aspartate 188 contacts Mg(2+).

The protein belongs to the HAD-like hydrolase superfamily. MasA/MtnC family. As to quaternary structure, monomer. The cofactor is Mg(2+).

The protein localises to the cytoplasm. It localises to the nucleus. The enzyme catalyses 5-methylsulfanyl-2,3-dioxopentyl phosphate + H2O = 1,2-dihydroxy-5-(methylsulfanyl)pent-1-en-3-one + phosphate. It functions in the pathway amino-acid biosynthesis; L-methionine biosynthesis via salvage pathway; L-methionine from S-methyl-5-thio-alpha-D-ribose 1-phosphate: step 3/6. The protein operates within amino-acid biosynthesis; L-methionine biosynthesis via salvage pathway; L-methionine from S-methyl-5-thio-alpha-D-ribose 1-phosphate: step 4/6. Functionally, bifunctional enzyme that catalyzes the enolization of 2,3-diketo-5-methylthiopentyl-1-phosphate (DK-MTP-1-P) into the intermediate 2-hydroxy-3-keto-5-methylthiopentenyl-1-phosphate (HK-MTPenyl-1-P), which is then dephosphorylated to form the acireductone 1,2-dihydroxy-3-keto-5-methylthiopentene (DHK-MTPene). The sequence is that of Enolase-phosphatase E1 from Pyricularia oryzae (strain 70-15 / ATCC MYA-4617 / FGSC 8958) (Rice blast fungus).